Here is a 131-residue protein sequence, read N- to C-terminus: Large ribosomal subunit protein uL22c (131 aa).

It belongs to the universal ribosomal protein uL22 family. In terms of assembly, part of the 50S ribosomal subunit.

Its subcellular location is the plastid. In terms of biological role, this protein binds specifically to 23S rRNA. Functionally, the globular domain of the protein is located near the polypeptide exit tunnel on the outside of the subunit, while an extended beta-hairpin is found that lines the wall of the exit tunnel in the center of the 70S ribosome. The sequence is that of Large ribosomal subunit protein uL22c (rpl22) from Aneura mirabilis (Parasitic liverwort).